A 208-amino-acid chain; its full sequence is Ribosomal RNA large subunit methyltransferase E (208 aa).

Residues glycine 62, tryptophan 64, aspartate 82, aspartate 98, and aspartate 123 each coordinate S-adenosyl-L-methionine. Lysine 163 (proton acceptor) is an active-site residue.

The protein belongs to the class I-like SAM-binding methyltransferase superfamily. RNA methyltransferase RlmE family.

It is found in the cytoplasm. It catalyses the reaction uridine(2552) in 23S rRNA + S-adenosyl-L-methionine = 2'-O-methyluridine(2552) in 23S rRNA + S-adenosyl-L-homocysteine + H(+). In terms of biological role, specifically methylates the uridine in position 2552 of 23S rRNA at the 2'-O position of the ribose in the fully assembled 50S ribosomal subunit. This is Ribosomal RNA large subunit methyltransferase E from Actinobacillus succinogenes (strain ATCC 55618 / DSM 22257 / CCUG 43843 / 130Z).